Consider the following 476-residue polypeptide: Adenosylhomocysteinase (476 aa).

Residues Thr-67, Asp-142, and Glu-202 each contribute to the substrate site. 203–205 (TTT) lines the NAD(+) pocket. Residues Lys-232 and Asp-236 each coordinate substrate. NAD(+) is bound by residues Asn-237, 266–271 (GYGDVG), Glu-289, Asn-324, 345–347 (IGH), and Asn-390.

It belongs to the adenosylhomocysteinase family. NAD(+) serves as cofactor.

It localises to the cytoplasm. The catalysed reaction is S-adenosyl-L-homocysteine + H2O = L-homocysteine + adenosine. It functions in the pathway amino-acid biosynthesis; L-homocysteine biosynthesis; L-homocysteine from S-adenosyl-L-homocysteine: step 1/1. In terms of biological role, may play a key role in the regulation of the intracellular concentration of adenosylhomocysteine. In Synechococcus sp. (strain CC9605), this protein is Adenosylhomocysteinase.